The chain runs to 1872 residues: Fatty acid synthase beta subunit pkiC (1872 aa).

The interval 174-425 (VFGGQGECSR…DQSRIPFRDR (252 aa)) is acetyltransferase (AT) domain. The interval 591–836 (NRVLGAPPIM…IIAATPGVSD (246 aa)) is enoyl reductase (ER) domain. The interval 1111–1132 (TTPASWSTLSLTERDTSEETSD) is disordered. A dehydratase (DH) domain region spans residues 1158–1597 (PSHPLWMRAL…MPLEKLVVEI (440 aa)). Residues 1518-1617 (PPSNEPYAQL…CFSILAKRKE (100 aa)) enclose the MaoC-like domain.

Belongs to the fungal fatty acid synthetase subunit beta family. In terms of assembly, [Alpha(6)beta(6)] hexamers of two multifunctional subunits (alpha and beta).

The enzyme catalyses acetyl-CoA + n malonyl-CoA + 2n NADPH + 4n H(+) = a long-chain-acyl-CoA + n CoA + n CO2 + 2n NADP(+).. It carries out the reaction holo-[ACP] + acetyl-CoA = acetyl-[ACP] + CoA. It catalyses the reaction holo-[ACP] + malonyl-CoA = malonyl-[ACP] + CoA. The catalysed reaction is a (3R)-hydroxyacyl-[ACP] = a (2E)-enoyl-[ACP] + H2O. The enzyme catalyses a 2,3-saturated acyl-[ACP] + NAD(+) = a (2E)-enoyl-[ACP] + NADH + H(+). It carries out the reaction (9Z)-octadecenoyl-[ACP] + H2O = (9Z)-octadecenoate + holo-[ACP] + H(+). Its pathway is secondary metabolite biosynthesis. In terms of biological role, fatty acid synthase beta subunit; part of the pki gene cluster that mediates the biosynthesis of 2,4-dihydroxy-3-methyl-6-(2-oxoundecyl)benzaldehyde. The first step in the pathway is the generation of the decanoyl starter unit by the FAS composed of subunits pkiB and pkiC, which is then transferred directly from the FAS to the SAT domain of the non-reducing polyketide synthase pkiA. PkiA condenses the decanoyyl starter unit with 4 malonyl-CoA units and performs one methylation step to yield 2,4-dihydroxy-3-methyl-6-(2-oxoundecyl)benzaldehyde. In Emericella nidulans (strain FGSC A4 / ATCC 38163 / CBS 112.46 / NRRL 194 / M139) (Aspergillus nidulans), this protein is Fatty acid synthase beta subunit pkiC.